A 154-amino-acid chain; its full sequence is Proteasome subunit beta type-4 (154 aa).

An N-acetylmethionine modification is found at methionine 1. A propeptide spanning residues 1 to 45 (MESILESRSGHWAGGPAPGQFYRIPPTPGSIVDPXSVLYGSPITR) is cleaved from the precursor. Tyrosine 102 carries the post-translational modification Phosphotyrosine.

It belongs to the peptidase T1B family. The 26S proteasome consists of a 20S proteasome core and two 19S regulatory subunits. The 20S proteasome core is a barrel-shaped complex made of 28 subunits that are arranged in four stacked rings. The two outer rings are each formed by seven alpha subunits, and the two inner rings are formed by seven beta subunits. The proteolytic activity is exerted by three beta-subunits PSMB5, PSMB6 and PSMB7. Forms a ternary complex with SMAD1 and OAZ1 before PSMB4 is incorporated into the 20S proteasome. Interacts with PRPF19.

It localises to the cytoplasm. It is found in the nucleus. Non-catalytic component of the 20S core proteasome complex involved in the proteolytic degradation of most intracellular proteins. This complex plays numerous essential roles within the cell by associating with different regulatory particles. Associated with two 19S regulatory particles, forms the 26S proteasome and thus participates in the ATP-dependent degradation of ubiquitinated proteins. The 26S proteasome plays a key role in the maintenance of protein homeostasis by removing misfolded or damaged proteins that could impair cellular functions, and by removing proteins whose functions are no longer required. Associated with the PA200 or PA28, the 20S proteasome mediates ubiquitin-independent protein degradation. This type of proteolysis is required in several pathways including spermatogenesis (20S-PA200 complex) or generation of a subset of MHC class I-presented antigenic peptides (20S-PA28 complex). SMAD1/OAZ1/PSMB4 complex mediates the degradation of the CREBBP/EP300 repressor SNIP1. The chain is Proteasome subunit beta type-4 (PSMB4) from Sus scrofa (Pig).